Reading from the N-terminus, the 249-residue chain is Triosephosphate isomerase (249 aa).

Substrate is bound at residue 9–11; the sequence is NWK. His-95 serves as the catalytic Electrophile. Catalysis depends on Glu-167, which acts as the Proton acceptor. Residues Gly-173, Ser-213, and 234 to 235 contribute to the substrate site; that span reads GG.

The protein belongs to the triosephosphate isomerase family. Homodimer.

The protein resides in the cytoplasm. It catalyses the reaction D-glyceraldehyde 3-phosphate = dihydroxyacetone phosphate. Its pathway is carbohydrate biosynthesis; gluconeogenesis. It participates in carbohydrate degradation; glycolysis; D-glyceraldehyde 3-phosphate from glycerone phosphate: step 1/1. Its function is as follows. Involved in the gluconeogenesis. Catalyzes stereospecifically the conversion of dihydroxyacetone phosphate (DHAP) to D-glyceraldehyde-3-phosphate (G3P). The sequence is that of Triosephosphate isomerase from Dictyoglomus turgidum (strain DSM 6724 / Z-1310).